Here is a 645-residue protein sequence, read N- to C-terminus: UPF0313 protein CLM_0251 (645 aa).

In terms of domain architecture, Radical SAM core spans 295-566; that stretch reads AIKEVKFSIT…RMQRALLQFS (272 aa). Residues cysteine 309, cysteine 313, and cysteine 316 each coordinate [4Fe-4S] cluster. The interval 598 to 645 is disordered; the sequence is NKPYKKSHKKNNAKNNNNHYNKNNNYNKNKDISKKNKKNSLSKHKKRK. Basic residues predominate over residues 600–609; it reads PYKKSHKKNN. A compositionally biased stretch (low complexity) spans 610–624; sequence AKNNNNHYNKNNNYN. The segment covering 632–645 has biased composition (basic residues); the sequence is KNKKNSLSKHKKRK.

The protein belongs to the UPF0313 family. Requires [4Fe-4S] cluster as cofactor.

The chain is UPF0313 protein CLM_0251 from Clostridium botulinum (strain Kyoto / Type A2).